The sequence spans 204 residues: Oxidoreductase iacF (204 aa).

Belongs to the oxidoreductase OpS7 family.

It participates in secondary metabolite biosynthesis. Functionally, oxidoreductase; part of the gene cluster that mediates the biosynthesis of iso-A82775C, a enylepoxycyclohexane and biosynthetic precursor of the chloropestolide anticancer natural products. Within the cluster, the prenyltransferase iacE prenylates siccayne to generate pestalodiol E, using dimethylallyl diphosphate (DMAPP) as cosubstrate. The probable oxidoreductase iacF is then involved in the epoxidation of pestalodiol F to pestalodiol F, which is further converted to pestalofone A by the short-chain dehydrogenase/reductase iacG. Iso-A82775C is subsequently generated from pestalofone A by the short-chain dehydrogenase/reductase iacC. Iso-A82775C is further condensed with maldoxin via a Diels-Alder reaction to produce the anticancer natural products chloropestolides A to E. The polypeptide is Oxidoreductase iacF (Pestalotiopsis fici (strain W106-1 / CGMCC3.15140)).